We begin with the raw amino-acid sequence, 430 residues long: Solanesyl-diphosphate synthase 1, mitochondrial (430 aa).

Residues 1 to 31 (MSWRWALARRVAALGATSGGGDGATAQAQRL) constitute a mitochondrion transit peptide. Isopentenyl diphosphate contacts are provided by Lys-133, Arg-136, and His-182. Positions 189 and 193 each coordinate Mg(2+). Residue Arg-198 participates in an all-trans-polyprenyl diphosphate binding. Arg-199 lines the isopentenyl diphosphate pocket. The an all-trans-polyprenyl diphosphate site is built by Lys-275, Thr-276, Gln-313, and Lys-330.

It belongs to the FPP/GGPP synthase family. Homodimer. Mg(2+) is required as a cofactor. In terms of tissue distribution, expressed in leaves, stems and roots. Highest expression in roots.

The protein localises to the mitochondrion. It catalyses the reaction 7 isopentenyl diphosphate + (2E)-geranyl diphosphate = all-trans-nonaprenyl diphosphate + 7 diphosphate. Its pathway is cofactor biosynthesis; ubiquinone biosynthesis. Functionally, involved in the supply of solanesyl diphosphate for ubiquinone-9 (UQ-9) biosynthesis in mitochondria. Farnesyl diphosphate is the preferred substrate. The chain is Solanesyl-diphosphate synthase 1, mitochondrial from Oryza sativa subsp. japonica (Rice).